The primary structure comprises 197 residues: Xanthine phosphoribosyltransferase (197 aa).

Leu20 and Asn27 together coordinate xanthine. 128–132 contacts 5-phospho-alpha-D-ribose 1-diphosphate; that stretch reads ANGQA. Lys156 contacts xanthine.

It belongs to the purine/pyrimidine phosphoribosyltransferase family. Xpt subfamily. As to quaternary structure, homodimer.

The protein resides in the cytoplasm. It carries out the reaction XMP + diphosphate = xanthine + 5-phospho-alpha-D-ribose 1-diphosphate. It participates in purine metabolism; XMP biosynthesis via salvage pathway; XMP from xanthine: step 1/1. Its function is as follows. Converts the preformed base xanthine, a product of nucleic acid breakdown, to xanthosine 5'-monophosphate (XMP), so it can be reused for RNA or DNA synthesis. The polypeptide is Xanthine phosphoribosyltransferase (Bacillus cereus (strain G9842)).